The sequence spans 151 residues: Deoxyuridine 5'-triphosphate nucleotidohydrolase (151 aa).

Substrate contacts are provided by residues 70-72 (RSG), Asn-83, 87-89 (LID), and Met-97.

This sequence belongs to the dUTPase family. Mg(2+) is required as a cofactor.

It catalyses the reaction dUTP + H2O = dUMP + diphosphate + H(+). Its pathway is pyrimidine metabolism; dUMP biosynthesis; dUMP from dCTP (dUTP route): step 2/2. In terms of biological role, this enzyme is involved in nucleotide metabolism: it produces dUMP, the immediate precursor of thymidine nucleotides and it decreases the intracellular concentration of dUTP so that uracil cannot be incorporated into DNA. The protein is Deoxyuridine 5'-triphosphate nucleotidohydrolase of Pasteurella multocida (strain Pm70).